Reading from the N-terminus, the 175-residue chain is Large ribosomal subunit protein uL10 (175 aa).

The protein belongs to the universal ribosomal protein uL10 family. In terms of assembly, part of the ribosomal stalk of the 50S ribosomal subunit. The N-terminus interacts with L11 and the large rRNA to form the base of the stalk. The C-terminus forms an elongated spine to which L12 dimers bind in a sequential fashion forming a multimeric L10(L12)X complex.

Functionally, forms part of the ribosomal stalk, playing a central role in the interaction of the ribosome with GTP-bound translation factors. The polypeptide is Large ribosomal subunit protein uL10 (rplJ) (Xylella fastidiosa (strain 9a5c)).